We begin with the raw amino-acid sequence, 121 residues long: Protein yippee-like 5 (121 aa).

Residues R13 to E110 enclose the Yippee domain. Positions 17, 20, 73, and 76 each coordinate Zn(2+). Position 118 is a phosphoserine (S118).

The protein belongs to the yippee family. In terms of assembly, identified in the CTLH complex that contains GID4, RANBP9 and/or RANBP10, MKLN1, MAEA, RMND5A (or alternatively its paralog RMND5B), GID8, ARMC8, WDR26 and YPEL5. Within this complex, MAEA, RMND5A (or alternatively its paralog RMND5B), GID8, WDR26, and RANBP9 and/or RANBP10 form the catalytic core, while GID4, MKLN1, ARMC8 and YPEL5 have ancillary roles. Interacts with RANBP9 and RANBP10.

The protein resides in the nucleus. Its subcellular location is the cytoplasm. The protein localises to the cytoskeleton. It localises to the microtubule organizing center. It is found in the centrosome. The protein resides in the spindle pole. Its subcellular location is the midbody. Its function is as follows. Component of the CTLH E3 ubiquitin-protein ligase complex that selectively accepts ubiquitin from UBE2H and mediates ubiquitination and subsequent proteasomal degradation of the transcription factor HBP1. Required for normal cell proliferation. This chain is Protein yippee-like 5 (YPEL5), found in Macaca fascicularis (Crab-eating macaque).